A 101-amino-acid chain; its full sequence is Large ribosomal subunit protein uL24 (101 aa).

This sequence belongs to the universal ribosomal protein uL24 family. In terms of assembly, part of the 50S ribosomal subunit.

In terms of biological role, one of two assembly initiator proteins, it binds directly to the 5'-end of the 23S rRNA, where it nucleates assembly of the 50S subunit. Its function is as follows. One of the proteins that surrounds the polypeptide exit tunnel on the outside of the subunit. In Borrelia garinii subsp. bavariensis (strain ATCC BAA-2496 / DSM 23469 / PBi) (Borreliella bavariensis), this protein is Large ribosomal subunit protein uL24.